A 361-amino-acid polypeptide reads, in one-letter code: 5-exo-hydroxycamphor dehydrogenase (361 aa).

Zn(2+) is bound by residues C40, H62, C98, C101, C104, and C170.

The protein belongs to the zinc-containing alcohol dehydrogenase family. Requires Zn(2+) as cofactor.

The catalysed reaction is (1R,4R,5R)-5-hydroxycamphor + NAD(+) = (1R,4R)-bornane-2,5-dione + NADH + H(+). The protein operates within terpene metabolism; (R)-camphor degradation. This Pseudomonas putida (Arthrobacter siderocapsulatus) protein is 5-exo-hydroxycamphor dehydrogenase (camD).